Reading from the N-terminus, the 246-residue chain is UDP-N-acetyl-D-mannosaminuronic acid transferase (246 aa).

This sequence belongs to the glycosyltransferase 26 family.

The catalysed reaction is UDP-N-acetyl-alpha-D-mannosaminouronate + N-acetyl-alpha-D-glucosaminyl-di-trans,octa-cis-undecaprenyl diphosphate = beta-D-ManNAcA-(1-&gt;4)-alpha-D-GlcNAc-di-trans,octa-cis-undecaprenyl diphosphate + UDP + H(+). Its pathway is bacterial outer membrane biogenesis; enterobacterial common antigen biosynthesis. Functionally, catalyzes the synthesis of Und-PP-GlcNAc-ManNAcA (Lipid II), the second lipid-linked intermediate involved in enterobacterial common antigen (ECA) synthesis. The polypeptide is UDP-N-acetyl-D-mannosaminuronic acid transferase (Escherichia coli O7:K1 (strain IAI39 / ExPEC)).